A 253-amino-acid polypeptide reads, in one-letter code: DNA polymerase sliding clamp 2 (253 aa).

It belongs to the PCNA family. In terms of assembly, homotrimer. The subunits circularize to form a toroid; DNA passes through its center. Replication factor C (RFC) is required to load the toroid on the DNA. Interacts with TIP.

Its activity is regulated as follows. Inhibited by interaction with the PCNA inhibitor TIP. Its function is as follows. Sliding clamp subunit that acts as a moving platform for DNA processing. Responsible for tethering the catalytic subunit of DNA polymerase and other proteins to DNA during high-speed replication. The chain is DNA polymerase sliding clamp 2 from Thermococcus kodakarensis (strain ATCC BAA-918 / JCM 12380 / KOD1) (Pyrococcus kodakaraensis (strain KOD1)).